An 83-amino-acid polypeptide reads, in one-letter code: MLGMYLTTAFNFLTASTPKTMSEGMTGIWTGLSSALWKVKEGITNILPEIMVFLGEAWIILIPFAIFCIIKILNFFRVMVKGF.

Residues Ile50–Ile70 traverse the membrane as a helical segment.

It belongs to the plectrovirus ORF7 family.

Its subcellular location is the host membrane. This is an uncharacterized protein from Spiroplasma citri (SpV1).